Consider the following 149-residue polypeptide: Endoribonuclease YbeY (149 aa).

Zn(2+) contacts are provided by H101, H105, and H111.

This sequence belongs to the endoribonuclease YbeY family. Requires Zn(2+) as cofactor.

The protein resides in the cytoplasm. Single strand-specific metallo-endoribonuclease involved in late-stage 70S ribosome quality control and in maturation of the 3' terminus of the 16S rRNA. This chain is Endoribonuclease YbeY, found in Thermotoga neapolitana (strain ATCC 49049 / DSM 4359 / NBRC 107923 / NS-E).